A 260-amino-acid polypeptide reads, in one-letter code: MICOS complex subunit mic25-a (260 aa).

The interval 1–92 (MGGSESTGRK…KPTARGVGHQ (92 aa)) is disordered. G2 carries the N-myristoyl glycine lipid modification. Residues 28–39 (RLSDEVVNRMKD) are compositionally biased toward basic and acidic residues. Positions 48-64 (STSTASGTTSGPTTFPS) are enriched in low complexity. Residues 94–187 (AEEDLYRRYE…LNSIEKKNLE (94 aa)) adopt a coiled-coil conformation. Residues 213-255 (DPVCMDLQSNILKCYAENKQERLNCSDLAKEYGKCVSAAQKNL) form the CHCH domain. 2 short sequence motifs (cx9C motif) span residues 216–226 (CMDLQSNILKC) and 237–247 (CSDLAKEYGKC). Disulfide bonds link C216/C247 and C226/C237.

Belongs to the MICOS complex subunit Mic19 family. Metazoan Mic25 subfamily. Component of the mitochondrial contact site and cristae organizing system (MICOS) complex (also known as MINOS or MitOS complex).

It is found in the mitochondrion inner membrane. Functionally, component of the MICOS complex, a large protein complex of the mitochondrial inner membrane that plays crucial roles in the maintenance of crista junctions, inner membrane architecture, and formation of contact sites to the outer membrane. In Xenopus laevis (African clawed frog), this protein is MICOS complex subunit mic25-a (chchd6-a).